Reading from the N-terminus, the 542-residue chain is Beta-fructofuranosidase, insoluble isoenzyme 5 (542 aa).

Residues 50–53, Gln-69, Trp-77, and 114–115 contribute to the substrate site; these read WQND and WS. Residue Asp-53 is part of the active site. Asn-142 carries an N-linked (GlcNAc...) asparagine glycan. Substrate-binding positions include 178–179 and Glu-233; that span reads RD. A disulfide bridge connects residues Cys-389 and Cys-436. N-linked (GlcNAc...) asparagine glycosylation is found at Asn-510 and Asn-516.

It belongs to the glycosyl hydrolase 32 family. Expressed in roots and leaves.

It localises to the secreted. Its subcellular location is the extracellular space. The protein localises to the apoplast. It is found in the cell wall. It carries out the reaction Hydrolysis of terminal non-reducing beta-D-fructofuranoside residues in beta-D-fructofuranosides.. Its function is as follows. May play a role in stress response. The protein is Beta-fructofuranosidase, insoluble isoenzyme 5 (CIN5) of Oryza sativa subsp. japonica (Rice).